Here is a 199-residue protein sequence, read N- to C-terminus: HAFHIWNVIATDGGAYQMLDGNGYGMNAEGLYDPELMAHFASRRIQHADALSETVKLVALTGHHGITTLGGASYGKARNLVPLARAAYDTALRQFDVLVMPTLPYVASELPAKDVDRATFITKALGMIANTAPFDVTGHPSLSVPAGLVNGVPVGMMITGRHFDDATVLRVGRAFEKLRGAFPTPAERASNSAPQLSPA.

This is an uncharacterized protein from Rhodococcus erythropolis (Arthrobacter picolinophilus).